The primary structure comprises 173 residues: Photosystem I assembly protein Ycf3 (173 aa).

TPR repeat units follow at residues 35 to 68 (AYVYYRDGLSAQNDGDYAEALENYEEALKLEENS), 72 to 105 (SETLKNMAIIYMSNGEEERAIETYRKALEENPNQ), and 120 to 153 (GRIAEEGGEQDSADRWFDQAADVWTQAVRLNPGG).

The protein belongs to the Ycf3 family.

The protein resides in the cellular thylakoid membrane. Its function is as follows. Essential for the assembly of the photosystem I (PSI) complex. May act as a chaperone-like factor to guide the assembly of the PSI subunits. This chain is Photosystem I assembly protein Ycf3, found in Synechococcus sp. (strain CC9605).